The following is a 144-amino-acid chain: Probable calcium-binding protein CML31 (144 aa).

4 EF-hand domains span residues 1-31 (MAEI…FSPQ), 32-67 (ITSE…NGGG), 72-107 (EEEV…LGEK), and 108-143 (HTME…NKES). Asp-45, Asp-47, Asp-49, Gln-51, Glu-56, Asp-85, Asp-87, Asp-89, Lys-91, Glu-96, Asp-121, Asp-123, Asp-125, and Glu-132 together coordinate Ca(2+).

In terms of biological role, potential calcium sensor. This chain is Probable calcium-binding protein CML31 (CML31), found in Arabidopsis thaliana (Mouse-ear cress).